A 374-amino-acid polypeptide reads, in one-letter code: Protein TAB2 homolog, chloroplastic (374 aa).

A chloroplast-targeting transit peptide spans 1–64 (MATLGFNTRR…SLSITKEQEV (64 aa)). The disordered stretch occupies residues 58–84 (ITKEQEVANEVEEDDPTSELSYLDPES). Over residues 64–74 (VANEVEEDDPT) the composition is skewed to acidic residues.

It localises to the plastid. Its subcellular location is the chloroplast. Nuclear genome-encoded A/U-rich RNA-binding protein involved in the biogenesis of photosystem I (PSI) and II (PSII). Required for the light-controlled accumulation of PSI and PSII during early plant development. Does not seem to be required for the translation of mRNAs of the PSI subunits. This is Protein TAB2 homolog, chloroplastic from Arabidopsis thaliana (Mouse-ear cress).